We begin with the raw amino-acid sequence, 43 residues long: Defensin (43 aa).

3 disulfide bridges follow: Cys3/Cys34, Cys20/Cys39, and Cys24/Cys41.

Its subcellular location is the secreted. Antibacterial peptide active against Gram-positive and Gram-negative bacteria. This chain is Defensin, found in Palomena prasina (Green shield bug).